A 507-amino-acid polypeptide reads, in one-letter code: Tryptamine 4-monooxygenase (507 aa).

An N-terminal signal peptide occupies residues 1–19; it reads MIVLLVSLVLAGCIYYANA. The disordered stretch occupies residues 403–425; that stretch reads PNPSEFRPERYLSSDGKPDPTVR. Residues 408–425 are compositionally biased toward basic and acidic residues; it reads FRPERYLSSDGKPDPTVR. Residue cysteine 439 participates in heme binding.

This sequence belongs to the cytochrome P450 family. The cofactor is heme.

The catalysed reaction is tryptamine + AH2 + O2 = 4-hydroxytryptamine + A + H2O. The protein operates within secondary metabolite biosynthesis. Its function is as follows. Tryptamine 4-monooxygenase; part of the gene cluster that mediates the biosynthesis of psilocybin, a psychotropic tryptamine-derived natural product. The first step in the pathway is the decarboxylation of L-tryptophan to tryptamine by the decarboxylase psiD. PsiD does not decarboxylate phenylalanine, tyrosine, or 5-hydroxy- L -tryptophan (5-HTP). 4-hydroxy-L-tryptophan is accepted as substrate by psiD as well. The cytochrome P450 monooxygenase psiH then converts tryptamine to 4-hydroxytryptamine. The kinase psiK catalyzes the 4-O-phosphorylation step by converting 4-hydroxytryptamine into norbaeocystin. The methyltransferase psiM then catalyzes iterative methyl transfer to the amino group of norbaeocystin to yield psilocybin via a monomethylated intermediate, baeocystin. This Psilocybe cyanescens protein is Tryptamine 4-monooxygenase.